Here is a 239-residue protein sequence, read N- to C-terminus: Leucine-rich repeat-containing protein 57 (239 aa).

The N-myristoyl glycine moiety is linked to residue glycine 2. 8 LRR repeats span residues 39–60, 63–85, 86–107, 109–130, 132–153, 154–175, 177–197, and 202–222; these read NLRTIDLSNNKIDSLPPLIIGK, LLKSLSLNNNKLTVLPDELCNLK, KLETLSLNNNHLRELPSTFGQL, ALKTLSLSGNQLGALPPQLCCL, HLDVVDLSKNQIRSIPDTVGEL, QAIELNLNQNQISQLSVKISCC, RLKVLRLEENCLELSMLPQSI, and QICLLAVEGNLFEIKKFRELE.

The protein resides in the membrane. The polypeptide is Leucine-rich repeat-containing protein 57 (Lrrc57) (Mus musculus (Mouse)).